The sequence spans 232 residues: Ubiquinone biosynthesis O-methyltransferase (232 aa).

Residues Arg36, Gly55, Asp76, and Leu120 each coordinate S-adenosyl-L-methionine.

It belongs to the methyltransferase superfamily. UbiG/COQ3 family.

The enzyme catalyses a 3-demethylubiquinol + S-adenosyl-L-methionine = a ubiquinol + S-adenosyl-L-homocysteine + H(+). The catalysed reaction is a 3-(all-trans-polyprenyl)benzene-1,2-diol + S-adenosyl-L-methionine = a 2-methoxy-6-(all-trans-polyprenyl)phenol + S-adenosyl-L-homocysteine + H(+). It participates in cofactor biosynthesis; ubiquinone biosynthesis. In terms of biological role, O-methyltransferase that catalyzes the 2 O-methylation steps in the ubiquinone biosynthetic pathway. The protein is Ubiquinone biosynthesis O-methyltransferase of Pseudomonas putida (strain GB-1).